Consider the following 153-residue polypeptide: Lysine-acyltransferase RtxC (153 aa).

Histidine 32 is an active-site residue.

Belongs to the RTX toxin acyltransferase family.

Its subcellular location is the cytoplasm. It catalyses the reaction a fatty acyl-[ACP] + L-lysyl-[protein] = N(6)-(fatty acyl)-L-lysyl-[protein] + holo-[ACP] + H(+). Catalyzes fatty acylation of the protoxin (RtxA) at internal lysine residues, thereby converting it to the active toxin. The polypeptide is Lysine-acyltransferase RtxC (rtxC) (Vibrio cholerae serotype O1 (strain ATCC 39315 / El Tor Inaba N16961)).